The chain runs to 256 residues: MAKYRRVVVKLSGRAIAGSAEFGFDSNALEHLAREIIAVRQSGVEVAIVVGGGNLFRGNQSDRWGIDRVEADNIGMLGTVINSLLLRGKLTALGEDNLRVMTAVPVPAVAEPYIRLRAVHLLEKGATVILACGNGQPFLTTDYPAVQRALELGADAVLAAKDGVDGVYDSDPKINPEAQRFSRLSYDEVISRGLRVMDQSAFILARDFGIPLHIFDIEQQGAMTAICRGEHRGTVIDTTGGKAGSAALASSAETVV.

10-13 (KLSG) contacts ATP. Residue Gly52 coordinates UMP. Positions 53 and 57 each coordinate ATP. UMP contacts are provided by residues Asp72 and 134 to 141 (NGQPFLTT). Positions 168 and 171 each coordinate ATP.

The protein belongs to the UMP kinase family. Homohexamer.

The protein resides in the cytoplasm. It carries out the reaction UMP + ATP = UDP + ADP. The protein operates within pyrimidine metabolism; CTP biosynthesis via de novo pathway; UDP from UMP (UMPK route): step 1/1. Inhibited by UTP. Functionally, catalyzes the reversible phosphorylation of UMP to UDP. The polypeptide is Uridylate kinase (Frankia alni (strain DSM 45986 / CECT 9034 / ACN14a)).